The following is a 448-amino-acid chain: ATP synthase subunit b-delta (448 aa).

Residues 1–168 are ATP synthase subunit b; it reads MSTFIGQLIG…GSVGAAKRPV (168 aa). A helical transmembrane segment spans residues 4–24; it reads FIGQLIGFAVIVFLVVKYVVP. The segment at 169-448 is ATP synthase subunit delta; the sequence is PGGYSGMHAA…LSAAALHLPN (280 aa).

The protein in the N-terminal section; belongs to the ATPase B chain family. In the C-terminal section; belongs to the ATPase delta chain family. As to quaternary structure, F-type ATPases have 2 components, F(1) - the catalytic core - and F(0) - the membrane proton channel. F(1) has five subunits: alpha(3), beta(3), gamma(1), delta(1), epsilon(1). F(0) has three main subunits: a(1), b(2) and c(10-14). The alpha and beta chains form an alternating ring which encloses part of the gamma chain. F(1) is attached to F(0) by a central stalk formed by the gamma and epsilon chains, while a peripheral stalk is formed by the delta and b chains.

The protein localises to the cell membrane. Its function is as follows. F(1)F(0) ATP synthase produces ATP from ADP in the presence of a proton or sodium gradient. F-type ATPases consist of two structural domains, F(1) containing the extramembraneous catalytic core and F(0) containing the membrane proton channel, linked together by a central stalk and a peripheral stalk. During catalysis, ATP synthesis in the catalytic domain of F(1) is coupled via a rotary mechanism of the central stalk subunits to proton translocation. Functionally, this fusion protein includes a component of the F(0) channel (subunit b) and of the F(1) subunit (subunit delta). Two copies of subunit b and one of delta together form the peripheral 'stator' stalk which links F(1) to F(0). The sequence is that of ATP synthase subunit b-delta (atpFH) from Mycobacteroides abscessus (strain ATCC 19977 / DSM 44196 / CCUG 20993 / CIP 104536 / JCM 13569 / NCTC 13031 / TMC 1543 / L948) (Mycobacterium abscessus).